Consider the following 335-residue polypeptide: tRNA N6-adenosine threonylcarbamoyltransferase (335 aa).

Residues H109, H113, and Y130 each contribute to the a divalent metal cation site. Residues 130-134 (YVSGG), D162, G177, E181, and N266 each bind substrate. Position 294 (D294) interacts with a divalent metal cation.

It belongs to the KAE1 / TsaD family. Component of the EKC/KEOPS complex composed of at least GON7, TP53RK, TPRKB, OSGEP and LAGE3; the whole complex dimerizes. Interacts with PRAME. It depends on a divalent metal cation as a cofactor. As to expression, widely expressed at low level. Expressed in heart, placenta, liver, kidney, lung, brain, skeletal muscle and pancreas.

The protein localises to the cytoplasm. The protein resides in the nucleus. It carries out the reaction L-threonylcarbamoyladenylate + adenosine(37) in tRNA = N(6)-L-threonylcarbamoyladenosine(37) in tRNA + AMP + H(+). In terms of biological role, component of the EKC/KEOPS complex that is required for the formation of a threonylcarbamoyl group on adenosine at position 37 (t(6)A37) in tRNAs that read codons beginning with adenine. The complex is probably involved in the transfer of the threonylcarbamoyl moiety of threonylcarbamoyl-AMP (TC-AMP) to the N6 group of A37. OSGEP likely plays a direct catalytic role in this reaction, but requires other protein(s) of the complex to fulfill this activity. This chain is tRNA N6-adenosine threonylcarbamoyltransferase, found in Homo sapiens (Human).